Consider the following 872-residue polypeptide: Cellulose synthase catalytic subunit [UDP-forming] (872 aa).

4 helical membrane-spanning segments follow: residues 30–50, 151–171, 173–193, and 230–250; these read SAFSATLGCFWMILAWIFIPL, ILGIIVTFSLILALICVTQPF, PLAQFIFLMLLWGGALIVRRM, and LVCGLILLFAETYAWIVLVLG. The interval 271–364 is catalytic subdomain A; the sequence is LWPSVDIFVP…FVSIFDCDHV (94 aa). D313 is a catalytic residue. The substrate site is built by D360 and D362. Residues 441–501 are catalytic subdomain B; it reads KPLDEIGGIA…GQRIRWARGM (61 aa). D457 is a catalytic residue. 5 consecutive transmembrane segments (helical) span residues 525–545, 547–567, 592–612, 640–660, and 668–688; these read VNAMFHFLSGIPRLIFLTAPL, FLLLHAYIIYAPALMIALFVL, IYETVLAWYIAPPTLVALINP, IFLVLLNLVGVAVGIWRYFYG, and VVVSMVWVFYNLIVLGGAVAV. One can recognise a PilZ domain in the interval 694–790; the sequence is QVRRSHRVEM…QHIDFVQCTF (97 aa). Residues 833–853 traverse the membrane as a helical segment; the sequence is SVKGIFRVLTSLVSWVVSFIP.

It belongs to the glycosyltransferase 2 family. Requires Mg(2+) as cofactor.

Its subcellular location is the cell inner membrane. The enzyme catalyses [(1-&gt;4)-beta-D-glucosyl](n) + UDP-alpha-D-glucose = [(1-&gt;4)-beta-D-glucosyl](n+1) + UDP + H(+). Its pathway is glycan metabolism; bacterial cellulose biosynthesis. Its activity is regulated as follows. Activated by bis-(3'-5') cyclic diguanylic acid (c-di-GMP). Functionally, catalytic subunit of cellulose synthase. It polymerizes uridine 5'-diphosphate glucose to cellulose, which is produced as an extracellular component for mechanical and chemical protection at the onset of the stationary phase, when the cells exhibit multicellular behavior (rdar morphotype). Coexpression of cellulose and thin aggregative fimbriae leads to a hydrophobic network with tightly packed cells embedded in a highly inert matrix. This chain is Cellulose synthase catalytic subunit [UDP-forming] (bcsA), found in Escherichia coli O157:H7.